The following is a 374-amino-acid chain: Alanine racemase (374 aa).

Residue lysine 40 is the Proton acceptor; specific for D-alanine of the active site. Position 40 is an N6-(pyridoxal phosphate)lysine (lysine 40). Arginine 139 lines the substrate pocket. Tyrosine 261 functions as the Proton acceptor; specific for L-alanine in the catalytic mechanism. Methionine 309 serves as a coordination point for substrate.

It belongs to the alanine racemase family. The cofactor is pyridoxal 5'-phosphate.

The catalysed reaction is L-alanine = D-alanine. The protein operates within amino-acid biosynthesis; D-alanine biosynthesis; D-alanine from L-alanine: step 1/1. In terms of biological role, catalyzes the interconversion of L-alanine and D-alanine. May also act on other amino acids. The chain is Alanine racemase (alr) from Rhodospirillum rubrum (strain ATCC 11170 / ATH 1.1.1 / DSM 467 / LMG 4362 / NCIMB 8255 / S1).